The following is a 200-amino-acid chain: dITP/XTP pyrophosphatase (200 aa).

7 to 12 (SNNYHK) is a substrate binding site. Catalysis depends on Asp-68, which acts as the Proton acceptor. Asp-68 contacts Mg(2+). Substrate-binding positions include Ser-69, 147–150 (FGYD), Lys-170, and 175–176 (HR).

The protein belongs to the HAM1 NTPase family. As to quaternary structure, homodimer. It depends on Mg(2+) as a cofactor.

The enzyme catalyses XTP + H2O = XMP + diphosphate + H(+). It catalyses the reaction dITP + H2O = dIMP + diphosphate + H(+). The catalysed reaction is ITP + H2O = IMP + diphosphate + H(+). Its function is as follows. Pyrophosphatase that catalyzes the hydrolysis of nucleoside triphosphates to their monophosphate derivatives, with a high preference for the non-canonical purine nucleotides XTP (xanthosine triphosphate), dITP (deoxyinosine triphosphate) and ITP. Seems to function as a house-cleaning enzyme that removes non-canonical purine nucleotides from the nucleotide pool, thus preventing their incorporation into DNA/RNA and avoiding chromosomal lesions. In Acholeplasma laidlawii (strain PG-8A), this protein is dITP/XTP pyrophosphatase.